The chain runs to 96 residues: Phosphoribosyl-ATP pyrophosphatase (96 aa).

It belongs to the PRA-PH family.

It localises to the cytoplasm. It catalyses the reaction 1-(5-phospho-beta-D-ribosyl)-ATP + H2O = 1-(5-phospho-beta-D-ribosyl)-5'-AMP + diphosphate + H(+). It functions in the pathway amino-acid biosynthesis; L-histidine biosynthesis; L-histidine from 5-phospho-alpha-D-ribose 1-diphosphate: step 2/9. The chain is Phosphoribosyl-ATP pyrophosphatase from Methanococcus maripaludis (strain C5 / ATCC BAA-1333).